A 369-amino-acid polypeptide reads, in one-letter code: S-adenosylmethionine:tRNA ribosyltransferase-isomerase (369 aa).

The protein belongs to the QueA family. In terms of assembly, monomer.

It localises to the cytoplasm. The enzyme catalyses 7-aminomethyl-7-carbaguanosine(34) in tRNA + S-adenosyl-L-methionine = epoxyqueuosine(34) in tRNA + adenine + L-methionine + 2 H(+). Its pathway is tRNA modification; tRNA-queuosine biosynthesis. In terms of biological role, transfers and isomerizes the ribose moiety from AdoMet to the 7-aminomethyl group of 7-deazaguanine (preQ1-tRNA) to give epoxyqueuosine (oQ-tRNA). This is S-adenosylmethionine:tRNA ribosyltransferase-isomerase from Synechococcus sp. (strain CC9311).